An 83-amino-acid chain; its full sequence is Putative membrane protein insertion efficiency factor (83 aa).

The tract at residues 63–83 (GGNDPVPDHFSLRRNKTDISD) is disordered. The segment covering 68-83 (VPDHFSLRRNKTDISD) has biased composition (basic and acidic residues).

Belongs to the UPF0161 family.

The protein resides in the cell membrane. In terms of biological role, could be involved in insertion of integral membrane proteins into the membrane. This Streptococcus agalactiae serotype Ia (strain ATCC 27591 / A909 / CDC SS700) protein is Putative membrane protein insertion efficiency factor.